The primary structure comprises 349 residues: Small ribosomal subunit biogenesis GTPase RsgA (349 aa).

The disordered stretch occupies residues 1 to 38; it reads MSKNKLSKGQERRVQANHQRRLKRTDNKPELDDSQLGE. One can recognise a CP-type G domain in the interval 102-272; sequence TSVLNRPDIY…VIDSPGVREF (171 aa). Residues 158–161 and 212–220 contribute to the GTP site; these read NKID and GQSGVGKSS. Residues C296, C301, H303, and C309 each coordinate Zn(2+).

This sequence belongs to the TRAFAC class YlqF/YawG GTPase family. RsgA subfamily. Monomer. Associates with 30S ribosomal subunit, binds 16S rRNA. The cofactor is Zn(2+).

The protein resides in the cytoplasm. In terms of biological role, one of several proteins that assist in the late maturation steps of the functional core of the 30S ribosomal subunit. Helps release RbfA from mature subunits. May play a role in the assembly of ribosomal proteins into the subunit. Circularly permuted GTPase that catalyzes slow GTP hydrolysis, GTPase activity is stimulated by the 30S ribosomal subunit. The protein is Small ribosomal subunit biogenesis GTPase RsgA of Serratia proteamaculans (strain 568).